Here is a 607-residue protein sequence, read N- to C-terminus: Serum albumin (607 aa).

The first 16 residues, 1 to 16, serve as a signal peptide directing secretion; that stretch reads MKWTILTALLIISAES. Residues 17–20 constitute a propeptide that is removed on maturation; that stretch reads KNLY. 3 consecutive Albumin domains span residues 19-209, 210-401, and 403-600; these read LYKR…TQLK, KALH…HVLA, and AIKE…ILIE. His27 provides a ligand contact to Cu cation. Cystine bridges form between Cys77–Cys86, Cys99–Cys115, Cys114–Cys125, Cys147–Cys192, Cys191–Cys200, Cys223–Cys269, Cys268–Cys276, Cys288–Cys302, Cys301–Cys312, Cys339–Cys384, Cys383–Cys392, Cys415–Cys461, Cys460–Cys471, Cys484–Cys500, Cys499–Cys510, Cys537–Cys582, and Cys581–Cys590. Residues His270 and Asp272 each coordinate Zn(2+). 2 residues coordinate Ca(2+): Asp272 and Glu275.

Belongs to the ALB/AFP/VDB family. Plasma. In the skin, widely distributed around the membranes of epithelial layer cells and within the stratum spongiosum of the dermis (at protein level).

The protein resides in the secreted. Functionally, serum albumin, the main protein of plasma, has a good binding capacity for water, Ca(2+), Na(+), K(+), fatty acids, hormones, bilirubin and drugs. Its main function is the regulation of the colloidal osmotic pressure of blood. Potent inhibitor of trypsin but has no inhibitory effect on thrombin, chymotrypsin, elastase and subtilisin. The protein is Serum albumin of Bombina maxima (Giant fire-bellied toad).